A 229-amino-acid chain; its full sequence is uncharacterized protein (229 aa).

Transmembrane regions (helical) follow at residues Ile21–Tyr41, Met56–Ala76, Ala83–Val103, Thr109–Val129, Ala141–Ser161, Gly162–Ser182, and Trp202–Leu222.

It belongs to the BI1 family.

It localises to the cell membrane. This is an uncharacterized protein from Streptococcus pyogenes serotype M3 (strain ATCC BAA-595 / MGAS315).